The sequence spans 460 residues: ATP synthase subunit beta 1 (460 aa).

ATP is bound at residue 149-156 (GGAGVGKT).

It belongs to the ATPase alpha/beta chains family. As to quaternary structure, F-type ATPases have 2 components, CF(1) - the catalytic core - and CF(0) - the membrane proton channel. CF(1) has five subunits: alpha(3), beta(3), gamma(1), delta(1), epsilon(1). CF(0) has three main subunits: a(1), b(2) and c(9-12). The alpha and beta chains form an alternating ring which encloses part of the gamma chain. CF(1) is attached to CF(0) by a central stalk formed by the gamma and epsilon chains, while a peripheral stalk is formed by the delta and b chains.

The protein localises to the cell inner membrane. It carries out the reaction ATP + H2O + 4 H(+)(in) = ADP + phosphate + 5 H(+)(out). Produces ATP from ADP in the presence of a proton gradient across the membrane. The catalytic sites are hosted primarily by the beta subunits. This chain is ATP synthase subunit beta 1, found in Nitrosomonas eutropha (strain DSM 101675 / C91 / Nm57).